The following is a 98-amino-acid chain: Citrate lyase acyl carrier protein (98 aa).

S14 is subject to O-(phosphoribosyl dephospho-coenzyme A)serine.

The protein belongs to the CitD family. In terms of assembly, oligomer with a subunit composition of (alpha,beta,gamma)6.

The protein resides in the cytoplasm. Covalent carrier of the coenzyme of citrate lyase. The sequence is that of Citrate lyase acyl carrier protein from Escherichia coli O81 (strain ED1a).